The following is a 96-amino-acid chain: Aspartyl/glutamyl-tRNA(Asn/Gln) amidotransferase subunit C (96 aa).

Belongs to the GatC family. As to quaternary structure, heterotrimer of A, B and C subunits.

The enzyme catalyses L-glutamyl-tRNA(Gln) + L-glutamine + ATP + H2O = L-glutaminyl-tRNA(Gln) + L-glutamate + ADP + phosphate + H(+). The catalysed reaction is L-aspartyl-tRNA(Asn) + L-glutamine + ATP + H2O = L-asparaginyl-tRNA(Asn) + L-glutamate + ADP + phosphate + 2 H(+). Its function is as follows. Allows the formation of correctly charged Asn-tRNA(Asn) or Gln-tRNA(Gln) through the transamidation of misacylated Asp-tRNA(Asn) or Glu-tRNA(Gln) in organisms which lack either or both of asparaginyl-tRNA or glutaminyl-tRNA synthetases. The reaction takes place in the presence of glutamine and ATP through an activated phospho-Asp-tRNA(Asn) or phospho-Glu-tRNA(Gln). This is Aspartyl/glutamyl-tRNA(Asn/Gln) amidotransferase subunit C from Fusobacterium nucleatum subsp. nucleatum (strain ATCC 25586 / DSM 15643 / BCRC 10681 / CIP 101130 / JCM 8532 / KCTC 2640 / LMG 13131 / VPI 4355).